Reading from the N-terminus, the 470-residue chain is Siroheme synthase 2 (470 aa).

The tract at residues 1-202 (MDYLPMFAKL…EDWQGAEQWL (202 aa)) is precorrin-2 dehydrogenase /sirohydrochlorin ferrochelatase. Residues 22–23 (EV) and 43–44 (PE) each bind NAD(+). Position 126 is a phosphoserine (Ser126). Residues 214-470 (GEVVLVGAGP…TCDLKLVSLA (257 aa)) are uroporphyrinogen-III C-methyltransferase. An S-adenosyl-L-methionine-binding site is contributed by Pro223. Asp246 (proton acceptor) is an active-site residue. Lys268 functions as the Proton donor in the catalytic mechanism. S-adenosyl-L-methionine contacts are provided by residues 299 to 301 (GGD), 329 to 330 (TA), Met381, and Gly410.

It in the N-terminal section; belongs to the precorrin-2 dehydrogenase / sirohydrochlorin ferrochelatase family. The protein in the C-terminal section; belongs to the precorrin methyltransferase family.

The catalysed reaction is uroporphyrinogen III + 2 S-adenosyl-L-methionine = precorrin-2 + 2 S-adenosyl-L-homocysteine + H(+). It carries out the reaction precorrin-2 + NAD(+) = sirohydrochlorin + NADH + 2 H(+). The enzyme catalyses siroheme + 2 H(+) = sirohydrochlorin + Fe(2+). The protein operates within cofactor biosynthesis; adenosylcobalamin biosynthesis; precorrin-2 from uroporphyrinogen III: step 1/1. It functions in the pathway cofactor biosynthesis; adenosylcobalamin biosynthesis; sirohydrochlorin from precorrin-2: step 1/1. Its pathway is porphyrin-containing compound metabolism; siroheme biosynthesis; precorrin-2 from uroporphyrinogen III: step 1/1. It participates in porphyrin-containing compound metabolism; siroheme biosynthesis; siroheme from sirohydrochlorin: step 1/1. The protein operates within porphyrin-containing compound metabolism; siroheme biosynthesis; sirohydrochlorin from precorrin-2: step 1/1. Multifunctional enzyme that catalyzes the SAM-dependent methylations of uroporphyrinogen III at position C-2 and C-7 to form precorrin-2 via precorrin-1. Then it catalyzes the NAD-dependent ring dehydrogenation of precorrin-2 to yield sirohydrochlorin. Finally, it catalyzes the ferrochelation of sirohydrochlorin to yield siroheme. In Aeromonas hydrophila subsp. hydrophila (strain ATCC 7966 / DSM 30187 / BCRC 13018 / CCUG 14551 / JCM 1027 / KCTC 2358 / NCIMB 9240 / NCTC 8049), this protein is Siroheme synthase 2.